A 247-amino-acid polypeptide reads, in one-letter code: MSALPIATNRYFDNHFERPGVKLLPNEFYTTAEDMVLMTVLGSCVAACLHDPYAGIGGMNHFMLPDDGADPGAAASESMRYGAYAMEVLINELIKAGGRRERFEAKVFGGAAVLAGMTTINIGDRNADFVRRYLALERIRITAEDLQGVHPRKVAFMPHSGRAMVKKLRLQVPGVTEREAALAREADRLRAARTRAQVELFAAKRPAAPQPARPRIELFGGRGTTPGAGSQAAGSPYAANLSRKQEA.

The segment at 204–247 is disordered; the sequence is KRPAAPQPARPRIELFGGRGTTPGAGSQAAGSPYAANLSRKQEA.

It belongs to the CheD family.

It catalyses the reaction L-glutaminyl-[protein] + H2O = L-glutamyl-[protein] + NH4(+). Its function is as follows. Probably deamidates glutamine residues to glutamate on methyl-accepting chemotaxis receptors (MCPs), playing an important role in chemotaxis. The sequence is that of Probable chemoreceptor glutamine deamidase CheD from Burkholderia orbicola (strain MC0-3).